We begin with the raw amino-acid sequence, 376 residues long: 12-oxophytodienoate reductase 1 (376 aa).

Residues 35–37 (PLT), A68, and Q110 each bind FMN. Substrate-binding positions include S143 and 187-190 (HGAH). Y192 serves as the catalytic Proton donor. FMN is bound at residue R239. R279 lines the substrate pocket. FMN-binding positions include G309 and 330–331 (GR).

This sequence belongs to the NADH:flavin oxidoreductase/NADH oxidase family. FMN is required as a cofactor. As to expression, constitutively expressed in roots, leaves, cotyledons, cells culture and to a lower extent in flowers.

It localises to the cytoplasm. It carries out the reaction (1S,2S)-OPC-8 + NADP(+) = (9S,13S,15Z)-12-oxophyto-10,15-dienoate + NADPH + H(+). It functions in the pathway lipid metabolism; oxylipin biosynthesis. Specifically cleaves olefinic bonds in alpha,beta-unsaturated carbonyls and may be involved in detoxification or modification of these reactive compounds. May be involved in the biosynthesis or metabolism of oxylipin signaling molecules. In vitro, reduces 9R,13R-12-oxophyodienoic acid (9R,13R-OPDA) to 9R,13R-OPC-8:0, but not 9S,13S-OPDA, the natural precursor of jasmonic acid. Also reduces N-ethylmaleimide and maleic acid. This chain is 12-oxophytodienoate reductase 1 (OPR1), found in Solanum lycopersicum (Tomato).